A 195-amino-acid polypeptide reads, in one-letter code: Penicillin-binding protein activator LpoB (195 aa).

Positions 1 to 16 (MKKRALIVLAALVLAS) are cleaved as a signal peptide. C17 carries the N-palmitoyl cysteine lipid modification. Residue C17 is the site of S-diacylglycerol cysteine attachment. The interval 19–51 (SRKPASPPAPIEPVPPPVTVSVQPPPPATSEPV) is disordered. Positions 23 to 51 (ASPPAPIEPVPPPVTVSVQPPPPATSEPV) are enriched in pro residues.

This sequence belongs to the LpoB family. Interacts with PBP1b.

The protein localises to the cell outer membrane. Its function is as follows. Regulator of peptidoglycan synthesis that is essential for the function of penicillin-binding protein 1B (PBP1b). The sequence is that of Penicillin-binding protein activator LpoB from Sodalis glossinidius (strain morsitans).